A 380-amino-acid chain; its full sequence is Flap endonuclease 1 (380 aa).

An N-domain region spans residues 1 to 104 (MGIHGLTKLI…AELEKRGEKR (104 aa)). D34 contributes to the Mg(2+) binding site. Positions 47 and 70 each coordinate DNA. Residues D86, E158, E160, D179, and D181 each contribute to the Mg(2+) site. The segment at 122–253 (NIDKFSKRLV…KRAIDLIKQH (132 aa)) is I-domain. Residue E158 coordinates DNA. DNA is bound by residues G231 and D233. Mg(2+) is bound at residue D233. Residues 336–344 (TQGRLDSFF) are interaction with PCNA. Positions 351–380 (SSKRKEPELKGSAKKKQKTGATPGKFKKGK) are disordered.

This sequence belongs to the XPG/RAD2 endonuclease family. FEN1 subfamily. In terms of assembly, interacts with PCNA. Three molecules of fen1 bind to one PCNA trimer with each molecule binding to one PCNA monomer. PCNA stimulates the nuclease activity without altering cleavage specificity. It depends on Mg(2+) as a cofactor. Post-translationally, phosphorylated. Phosphorylation upon DNA damage induces relocalization to the nuclear plasma.

It is found in the nucleus. The protein localises to the nucleolus. The protein resides in the nucleoplasm. Its subcellular location is the mitochondrion. Structure-specific nuclease with 5'-flap endonuclease and 5'-3' exonuclease activities involved in DNA replication and repair. During DNA replication, cleaves the 5'-overhanging flap structure that is generated by displacement synthesis when DNA polymerase encounters the 5'-end of a downstream Okazaki fragment. It enters the flap from the 5'-end and then tracks to cleave the flap base, leaving a nick for ligation. Also involved in the long patch base excision repair (LP-BER) pathway, by cleaving within the apurinic/apyrimidinic (AP) site-terminated flap. Acts as a genome stabilization factor that prevents flaps from equilibrating into structures that lead to duplications and deletions. Also possesses 5'-3' exonuclease activity on nicked or gapped double-stranded DNA, and exhibits RNase H activity. Also involved in replication and repair of rDNA and in repairing mitochondrial DNA. This Anoplopoma fimbria (Sablefish) protein is Flap endonuclease 1 (fen1).